The chain runs to 407 residues: POC1 centriolar protein homolog A (407 aa).

WD repeat units lie at residues 17 to 56 (GHRD…RAYR), 59 to 98 (GHKD…ESTV), 101 to 140 (AHTA…FLFS), 143 to 182 (QHIN…CVHS), 185 to 224 (EHGG…LLQH), 227 to 266 (LHSA…LLYT), and 269 to 308 (GHQG…VDYG). A disordered region spans residues 317 to 357 (PATRASSSGTLPEVDPLVPPGRGRSQESMQSHSQEPVSVPQ). Over residues 342–357 (QESMQSHSQEPVSVPQ) the composition is skewed to polar residues. Residues 369-397 (QLDVLTQTVSILEQRLTLTEDKLKQCLEN) adopt a coiled-coil conformation.

This sequence belongs to the WD repeat POC1 family. Interacts with POC1B.

Its subcellular location is the cytoplasm. It localises to the cytoskeleton. The protein resides in the microtubule organizing center. The protein localises to the centrosome. It is found in the centriole. Its subcellular location is the cilium basal body. It localises to the spindle pole. Plays an important role in centriole assembly and/or stability and ciliogenesis. Involved in early steps of centriole duplication, as well as in the later steps of centriole length control. Acts in concert with POC1B to ensure centriole integrity and proper mitotic spindle formation. The protein is POC1 centriolar protein homolog A (POC1A) of Bos taurus (Bovine).